Reading from the N-terminus, the 456-residue chain is Probable serine incorporator (456 aa).

A run of 11 helical transmembrane segments spans residues 10-32 (AASC…CCNF), 44-64 (IVYS…LAPG), 95-115 (VCFG…GVTS), 126-146 (GFWG…FFIP), 153-173 (VWMY…LVLL), 195-215 (VWAV…VAGI), 234-254 (KFFI…AIHP), 265-285 (LLQA…ALSF), 301-321 (LAGM…MVVY), 383-403 (VAYS…YIMM), and 430-450 (IASS…PALF).

Belongs to the TDE1 family.

Its subcellular location is the endoplasmic reticulum membrane. Functionally, enhances the incorporation of serine into phosphatidylserine and sphingolipids. This chain is Probable serine incorporator (serinc), found in Nematostella vectensis (Starlet sea anemone).